The chain runs to 81 residues: Large ribosomal subunit protein bL31 (81 aa).

Belongs to the bacterial ribosomal protein bL31 family. Type A subfamily. Part of the 50S ribosomal subunit.

In terms of biological role, binds the 23S rRNA. This chain is Large ribosomal subunit protein bL31, found in Synechocystis sp. (strain ATCC 27184 / PCC 6803 / Kazusa).